The following is a 1070-amino-acid chain: Potassium/chloride cotransporter 3 (1070 aa).

The next 15 helical transmembrane spans lie at 92–112 (GVML…TMFI), 114–134 (LFWV…AICC), 142–162 (ISLS…YFII), 174–194 (VGIL…VGGV), 196–216 (VILM…LHDT), 228–248 (LYGT…VKFV), 251–271 (LAPV…GGGI), 400–420 (FFML…GTNM), 433–453 (VGTI…AILF), 473–493 (TMVV…GAFL), 534–554 (PFLG…LGAV), 557–577 (IAEV…LIAV), 600–620 (LLGA…LACI), 791–811 (LVLF…LIVT), and 827–847 (FIDI…AYLL).

Expressed in the amphid sheath glia and the cephalic sheath glia. Also expressed in the inner labial and outer labial sheath and socket glia and as well as phasmid sheath glia.

It localises to the cell membrane. In terms of biological role, probable potassium/chloride cotransporter that functions in the amphid sheath glial cells to regulate thermotaxis behavior. By maintaining chloride homeostasis, negatively regulates guanylate cyclase gcy-8 in the thermosensory AFD neurons and thereby controls the microvilli receptive ending morphology of the AFD neurons and thermotaxis. Modulates the temperature-evoked neuronal activity of the AFD neurons such as calcium responses to temperature gradients. Might also play a role in the chemotaxis behavior mediated by the sensory neurons AWA and AWC. This Caenorhabditis elegans protein is Potassium/chloride cotransporter 3 (kcc-3).